A 428-amino-acid polypeptide reads, in one-letter code: Synaptotagmin-1 (428 aa).

Residues 1 to 67 (MDSLLARVKR…KDKLINEIEN (67 aa)) are Vesicular-facing. The interval 16–50 (ALNPAQEGVTGGPDAAGLPDVSTSSPGGGGAGDKL) is disordered. Residues 68 to 92 (LPIWAIVLIIAGSLLFLVCCVYCVC) traverse the membrane as a helical segment. At 93–428 (RRSCRKRKKK…HTLQEVPEKN (336 aa)) the chain is on the cytoplasmic side. A Phosphoserine; by PRKC2 modification is found at S123. The interval 147-395 (STKSEVKLGK…PIGRCVLGCN (249 aa)) is phospholipid binding. C2 domains are found at residues 153–272 (KLGK…EDWK) and 286–419 (KLGD…AQWH). D184, D190, D242, F243, D244, S247, K248, D250, D317, D323, D377, and D379 together coordinate Ca(2+).

This sequence belongs to the synaptotagmin family. As to quaternary structure, binds SNAP25. Isoform 3 binds SNAP25 with higher affinity. Ca(2+) is required as a cofactor.

It is found in the cytoplasmic vesicle. The protein localises to the secretory vesicle. The protein resides in the synaptic vesicle membrane. It localises to the synapse. Functionally, acts as inhibitor of neurotransmitter release. Overexpression leads to a decrease in the amplitude of the excitatory postsynaptic potential in dissected cholinergic and glutaminergic neurons while depletion with antisense oligonucleotides leads to an increase. Overexpression of isoform 1 blocks the reversal of synaptic depression by serotonin in sensory neurons. In Aplysia californica (California sea hare), this protein is Synaptotagmin-1 (SYT1).